Reading from the N-terminus, the 94-residue chain is MLKPLGDRVVIEVLEAEEKTASGIVLPDSAKEKPQSGKIVAVGSGRVLDNGTKEPLEVAEGDTVIFAKYSGTEVTYEGTDYLILRESDILAITK.

The protein belongs to the GroES chaperonin family. As to quaternary structure, heptamer of 7 subunits arranged in a ring. Interacts with the chaperonin GroEL.

The protein resides in the cytoplasm. Functionally, together with the chaperonin GroEL, plays an essential role in assisting protein folding. The GroEL-GroES system forms a nano-cage that allows encapsulation of the non-native substrate proteins and provides a physical environment optimized to promote and accelerate protein folding. GroES binds to the apical surface of the GroEL ring, thereby capping the opening of the GroEL channel. The polypeptide is Co-chaperonin GroES (Listeria monocytogenes serotype 4b (strain CLIP80459)).